A 378-amino-acid polypeptide reads, in one-letter code: Heterogeneous nuclear ribonucleoprotein A3 (378 aa).

Methionine 1 is modified (N-acetylmethionine). A compositionally biased stretch (pro residues) spans 1–10; that stretch reads MEVKPPPGRP. Residues 1–34 form a disordered region; that stretch reads MEVKPPPGRPQPDSGRRRRRRGEEGHDPKEPEQL. Residue lysine 4 forms a Glycyl lysine isopeptide (Lys-Gly) (interchain with G-Cter in SUMO2) linkage. Serine 14 is subject to Phosphoserine. Residues 21-34 show a composition bias toward basic and acidic residues; the sequence is RGEEGHDPKEPEQL. In terms of domain architecture, RRM 1 spans 35–118; that stretch reads RKLFIGGLSF…RAVSREDSVK (84 aa). Lysine 36 participates in a covalent cross-link: Glycyl lysine isopeptide (Lys-Gly) (interchain with G-Cter in SUMO2). Serine 43 is subject to Phosphoserine. Arginine 52 carries the post-translational modification Dimethylated arginine; alternate. Arginine 52 is modified (omega-N-methylarginine; alternate). At arginine 76 the chain carries Omega-N-methylarginine. Serine 112 and serine 116 each carry phosphoserine. Lysine 118 is covalently cross-linked (Glycyl lysine isopeptide (Lys-Gly) (interchain with G-Cter in SUMO2)). Phosphothreonine is present on threonine 124. The RRM 2 domain maps to 126-205; it reads KKIFVGGIKE…CEVKKALSKQ (80 aa). An N6-acetyllysine; alternate modification is found at lysine 134. Lysine 134 participates in a covalent cross-link: Glycyl lysine isopeptide (Lys-Gly) (interchain with G-Cter in SUMO2); alternate. Residues lysine 151 and lysine 182 each participate in a glycyl lysine isopeptide (Lys-Gly) (interchain with G-Cter in SUMO2) cross-link. The segment at 204-225 is disordered; it reads KQEMQSAGSQRGRGGGSGNFMG. Arginine 214, arginine 216, arginine 226, arginine 239, and arginine 246 each carry omega-N-methylarginine; alternate. An asymmetric dimethylarginine; alternate mark is found at arginine 214, arginine 216, arginine 226, arginine 239, and arginine 246. The segment covering 214-225 has biased composition (gly residues); the sequence is RGRGGGSGNFMG. Arginine 257 carries the omega-N-methylarginine modification. Arginine 286 is subject to Asymmetric dimethylarginine. Residues 336–378 are disordered; the sequence is SGQQQSNYGPMKGGSFGGRSSGSPYGGGYGSGGGSGGYGSRRF. Residues 346–378 show a composition bias toward gly residues; sequence MKGGSFGGRSSGSPYGGGYGSGGGSGGYGSRRF. Serine 350 carries the post-translational modification Phosphoserine. At arginine 354 the chain carries Omega-N-methylarginine. The residue at position 358 (serine 358) is a Phosphoserine. Phosphotyrosine is present on residues tyrosine 360 and tyrosine 364. A phosphoserine mark is found at serine 366 and serine 370. Tyrosine 373 carries the phosphotyrosine modification. Position 375 is a phosphoserine (serine 375).

In terms of assembly, identified in the spliceosome C complex.

It is found in the nucleus. In terms of biological role, plays a role in cytoplasmic trafficking of RNA. Binds to the cis-acting response element, A2RE. May be involved in pre-mRNA splicing. In Homo sapiens (Human), this protein is Heterogeneous nuclear ribonucleoprotein A3 (HNRNPA3).